The chain runs to 315 residues: 4-hydroxy-3-methylbut-2-enyl diphosphate reductase (315 aa).

Cys12 contributes to the [4Fe-4S] cluster binding site. (2E)-4-hydroxy-3-methylbut-2-enyl diphosphate is bound by residues His43 and His81. Positions 43 and 81 each coordinate dimethylallyl diphosphate. His43 and His81 together coordinate isopentenyl diphosphate. Residue Cys103 coordinates [4Fe-4S] cluster. His131 contributes to the (2E)-4-hydroxy-3-methylbut-2-enyl diphosphate binding site. His131 serves as a coordination point for dimethylallyl diphosphate. His131 lines the isopentenyl diphosphate pocket. The active-site Proton donor is Glu133. Thr172 contributes to the (2E)-4-hydroxy-3-methylbut-2-enyl diphosphate binding site. Cys200 contributes to the [4Fe-4S] cluster binding site. Residues Ser228, Asn230, and Ser273 each coordinate (2E)-4-hydroxy-3-methylbut-2-enyl diphosphate. The dimethylallyl diphosphate site is built by Ser228, Asn230, and Ser273. Isopentenyl diphosphate contacts are provided by Ser228, Asn230, and Ser273.

It belongs to the IspH family. [4Fe-4S] cluster serves as cofactor.

It catalyses the reaction isopentenyl diphosphate + 2 oxidized [2Fe-2S]-[ferredoxin] + H2O = (2E)-4-hydroxy-3-methylbut-2-enyl diphosphate + 2 reduced [2Fe-2S]-[ferredoxin] + 2 H(+). The enzyme catalyses dimethylallyl diphosphate + 2 oxidized [2Fe-2S]-[ferredoxin] + H2O = (2E)-4-hydroxy-3-methylbut-2-enyl diphosphate + 2 reduced [2Fe-2S]-[ferredoxin] + 2 H(+). It participates in isoprenoid biosynthesis; dimethylallyl diphosphate biosynthesis; dimethylallyl diphosphate from (2E)-4-hydroxy-3-methylbutenyl diphosphate: step 1/1. It functions in the pathway isoprenoid biosynthesis; isopentenyl diphosphate biosynthesis via DXP pathway; isopentenyl diphosphate from 1-deoxy-D-xylulose 5-phosphate: step 6/6. Catalyzes the conversion of 1-hydroxy-2-methyl-2-(E)-butenyl 4-diphosphate (HMBPP) into a mixture of isopentenyl diphosphate (IPP) and dimethylallyl diphosphate (DMAPP). Acts in the terminal step of the DOXP/MEP pathway for isoprenoid precursor biosynthesis. The sequence is that of 4-hydroxy-3-methylbut-2-enyl diphosphate reductase from Exiguobacterium sibiricum (strain DSM 17290 / CCUG 55495 / CIP 109462 / JCM 13490 / 255-15).